The primary structure comprises 227 residues: Ribosomal RNA large subunit methyltransferase E (227 aa).

The S-adenosyl-L-methionine site is built by Gly78, Trp80, Asp103, Asp119, and Asp143. Lys183 functions as the Proton acceptor in the catalytic mechanism.

It belongs to the class I-like SAM-binding methyltransferase superfamily. RNA methyltransferase RlmE family.

It localises to the cytoplasm. The catalysed reaction is uridine(2552) in 23S rRNA + S-adenosyl-L-methionine = 2'-O-methyluridine(2552) in 23S rRNA + S-adenosyl-L-homocysteine + H(+). Functionally, specifically methylates the uridine in position 2552 of 23S rRNA at the 2'-O position of the ribose in the fully assembled 50S ribosomal subunit. This is Ribosomal RNA large subunit methyltransferase E from Rickettsia rickettsii (strain Iowa).